A 239-amino-acid chain; its full sequence is Gamma-lactamase MBL2 (239 aa).

6 residues coordinate Zn(2+): His56, His58, Asp60, His61, His141, and Asp165.

This sequence belongs to the metallo-beta-lactamase superfamily.

In terms of biological role, gamma-lactamase; part of the Fusarium detoxification of benzoxazolinone cluster 2 (FDB2) involved in the degradation of benzoxazolinones produced by the host plant. Maize, wheat, and rye produce the 2 benzoxazinone phytoanticipins 2,4-dihy-droxy-7-methoxy-1,4-benzoxazin-3-one (DIMBOA) and 2,4-dihydroxy-1,4-benzoxazin-3-one (DIBOA) that, due to their inherent instability once released, spontaneously degrade to the more stable corresponding benzoxazolinones, 6-methoxy-2-benzoxazolinone (MBOA) and 2-benzoxazolinone (BOA), respectively. The first step in the detoxification of benzoxazolinones involves the hydrolysis of the cyclic ester bond of benzoxazolinones by the FDB1 cluster gamma-lactamase MBL1 to aminophenols. MBL1 is able to convert BOA into 2-aminophenol (2-AP), as well as MBOA into 5-methoxy-2-aminophenol (2-AMP). The FDB2 cluster N-malonyltransferase FDB2/NAT1 then metabolizes aminophenols via N-malonylation to non-toxic malonamic acids. FDB2/NAT1 converts 2-AP into N-(2-hydroxyphenyl) malonamic acid (HPMA) and 2-AMP into N-(2-hydroxy-4-methoxyphenyl) malonamic acid (HMPMA). The duplicated dienlactone hydrolases DLH1 and DLH2 may provide redundant function for hydrolyzing the lactone moiety in the BOA molecule. The roles of the amidases and other enzymes encoded by the 2 FDB clusters have not been identified so far. The polypeptide is Gamma-lactamase MBL2 (Gibberella moniliformis (strain M3125 / FGSC 7600) (Maize ear and stalk rot fungus)).